Reading from the N-terminus, the 396-residue chain is DNA polymerase IV (396 aa).

The UmuC domain occupies 6 to 186 (IIHVDMDAFY…LPISRLWGVG (181 aa)). The Mg(2+) site is built by Asp10 and Asp104. Glu105 is an active-site residue.

Belongs to the DNA polymerase type-Y family. In terms of assembly, monomer. The cofactor is Mg(2+).

Its subcellular location is the cytoplasm. It carries out the reaction DNA(n) + a 2'-deoxyribonucleoside 5'-triphosphate = DNA(n+1) + diphosphate. In terms of biological role, poorly processive, error-prone DNA polymerase involved in untargeted mutagenesis. Copies undamaged DNA at stalled replication forks, which arise in vivo from mismatched or misaligned primer ends. These misaligned primers can be extended by PolIV. Exhibits no 3'-5' exonuclease (proofreading) activity. May be involved in translesional synthesis, in conjunction with the beta clamp from PolIII. The polypeptide is DNA polymerase IV (Desulfatibacillum aliphaticivorans).